Reading from the N-terminus, the 293-residue chain is N(1)-aminopropylagmatine ureohydrolase (293 aa).

The Mn(2+) site is built by histidine 105, aspartate 128, histidine 130, aspartate 132, aspartate 210, and aspartate 212.

It belongs to the arginase family. Requires Mn(2+) as cofactor.

It is found in the cytoplasm. The enzyme catalyses N(1)-(3-aminopropyl)agmatine + H2O = urea + spermidine. It functions in the pathway amine and polyamine biosynthesis; spermidine biosynthesis. Functionally, involved in the biosynthesis of polyamines which are thought to support the growth of thermophilic microorganisms under high-temperature conditions. It seems that long-chain and branched-chain of polyamines effectively stabilize DNA and RNA, respectively. Catalyzes the decarboxylation of N1-(3-aminopropyl)agmatine to yield spermidine and urea. It cannot use agmatine as substrate. In Thermus thermophilus (strain ATCC 27634 / DSM 579 / HB8), this protein is N(1)-aminopropylagmatine ureohydrolase.